Here is a 1071-residue protein sequence, read N- to C-terminus: DNA-directed RNA polymerase subunit beta (1071 aa).

The protein belongs to the RNA polymerase beta chain family. In plastids the minimal PEP RNA polymerase catalytic core is composed of four subunits: alpha, beta, beta', and beta''. When a (nuclear-encoded) sigma factor is associated with the core the holoenzyme is formed, which can initiate transcription.

Its subcellular location is the plastid. The protein localises to the chloroplast. It carries out the reaction RNA(n) + a ribonucleoside 5'-triphosphate = RNA(n+1) + diphosphate. Its function is as follows. DNA-dependent RNA polymerase catalyzes the transcription of DNA into RNA using the four ribonucleoside triphosphates as substrates. The sequence is that of DNA-directed RNA polymerase subunit beta from Panax ginseng (Korean ginseng).